A 586-amino-acid polypeptide reads, in one-letter code: Alpha-1,2-mannosyltransferase MNN5 (586 aa).

The first 29 residues, 1-29 (MLIRLKKRKILQVIVSAVVLILFFCSVHN), serve as a signal peptide directing secretion. Asn-113, Asn-136, Asn-259, and Asn-264 each carry an N-linked (GlcNAc...) asparagine glycan.

The protein belongs to the MNN1/MNT family. Glycosylated.

It is found in the golgi apparatus. The protein resides in the cis-Golgi network. The protein operates within protein modification; protein glycosylation. Functionally, responsible for addition of first and second mannose residues to the outer chain of core N-linked polysaccharides and to O-linked mannotriose. Implicated in late Golgi modifications. In Saccharomyces cerevisiae (strain YJM789) (Baker's yeast), this protein is Alpha-1,2-mannosyltransferase MNN5 (MNN5).